We begin with the raw amino-acid sequence, 314 residues long: Methionyl-tRNA formyltransferase (314 aa).

113–116 (SLLP) is a binding site for (6S)-5,6,7,8-tetrahydrofolate.

It belongs to the Fmt family.

The enzyme catalyses L-methionyl-tRNA(fMet) + (6R)-10-formyltetrahydrofolate = N-formyl-L-methionyl-tRNA(fMet) + (6S)-5,6,7,8-tetrahydrofolate + H(+). Attaches a formyl group to the free amino group of methionyl-tRNA(fMet). The formyl group appears to play a dual role in the initiator identity of N-formylmethionyl-tRNA by promoting its recognition by IF2 and preventing the misappropriation of this tRNA by the elongation apparatus. The chain is Methionyl-tRNA formyltransferase from Pseudomonas aeruginosa (strain ATCC 15692 / DSM 22644 / CIP 104116 / JCM 14847 / LMG 12228 / 1C / PRS 101 / PAO1).